The following is a 91-amino-acid chain: Signal recognition particle 19 kDa protein (91 aa).

Belongs to the SRP19 family. Part of the signal recognition particle protein translocation system, which is composed of SRP and FtsY. Archaeal SRP consists of a 7S RNA molecule of 300 nucleotides and two protein subunits: SRP54 and SRP19.

The protein localises to the cytoplasm. In terms of biological role, involved in targeting and insertion of nascent membrane proteins into the cytoplasmic membrane. Binds directly to 7S RNA and mediates binding of the 54 kDa subunit of the SRP. This Methanothermobacter thermautotrophicus (strain ATCC 29096 / DSM 1053 / JCM 10044 / NBRC 100330 / Delta H) (Methanobacterium thermoautotrophicum) protein is Signal recognition particle 19 kDa protein.